The sequence spans 340 residues: Delta(1)-pyrroline-2-carboxylate reductase 2 (340 aa).

Catalysis depends on Ser50, which acts as the Charge relay system. Residue His51 is the Proton donor of the active site. Arg55 is a substrate binding site. Residue 123 to 127 participates in NADP(+) binding; it reads HFSAL. Thr163 provides a ligand contact to substrate. 181 to 183 is a binding site for NADP(+); the sequence is DFA. 189–190 is a substrate binding site; it reads RG. Asp191 acts as the Charge relay system in catalysis. Residues 232 to 233 and 307 to 313 contribute to the NADP(+) site; these read HK and RLPSQRR.

It belongs to the LDH2/MDH2 oxidoreductase family. As to quaternary structure, homodimer.

It carries out the reaction L-proline + NAD(+) = 1-pyrroline-2-carboxylate + NADH + H(+). It catalyses the reaction L-proline + NADP(+) = 1-pyrroline-2-carboxylate + NADPH + H(+). Its function is as follows. Catalyzes the reduction of Delta(1)-pyrroline-2-carboxylate (Pyr2C) to L-proline, using NADPH as the electron donor. May be involved in a degradation pathway that converts trans-3-hydroxy-L-proline (t3LHyp) to L-proline. This Burkholderia multivorans (strain ATCC 17616 / 249) protein is Delta(1)-pyrroline-2-carboxylate reductase 2.